The chain runs to 339 residues: Glycerol-3-phosphate dehydrogenase [NAD(P)+] (339 aa).

Residues Ser-15, Tyr-16, His-36, and Lys-110 each contribute to the NADPH site. Sn-glycerol 3-phosphate-binding residues include Lys-110, Gly-139, and Thr-141. Ala-143 is an NADPH binding site. 5 residues coordinate sn-glycerol 3-phosphate: Lys-195, Asp-248, Ser-258, Arg-259, and Asn-260. Lys-195 acts as the Proton acceptor in catalysis. Residue Arg-259 coordinates NADPH. Residues Val-283 and Glu-285 each contribute to the NADPH site.

Belongs to the NAD-dependent glycerol-3-phosphate dehydrogenase family.

It localises to the cytoplasm. It catalyses the reaction sn-glycerol 3-phosphate + NAD(+) = dihydroxyacetone phosphate + NADH + H(+). The catalysed reaction is sn-glycerol 3-phosphate + NADP(+) = dihydroxyacetone phosphate + NADPH + H(+). It functions in the pathway membrane lipid metabolism; glycerophospholipid metabolism. Its function is as follows. Catalyzes the reduction of the glycolytic intermediate dihydroxyacetone phosphate (DHAP) to sn-glycerol 3-phosphate (G3P), the key precursor for phospholipid synthesis. This is Glycerol-3-phosphate dehydrogenase [NAD(P)+] from Escherichia coli O17:K52:H18 (strain UMN026 / ExPEC).